The following is a 270-amino-acid chain: Undecaprenyl-diphosphatase 3 (270 aa).

7 consecutive transmembrane segments (helical) span residues 5–25, 42–62, 89–109, 117–137, 192–212, 220–240, and 250–270; these read YYIL…PIPI, IEGF…VLLI, FFFI…GVLF, LKGV…LWII, FSFL…ITDI, TLFV…YISL, and GNLK…LIFL.

It belongs to the UppP family.

Its subcellular location is the cell membrane. It catalyses the reaction di-trans,octa-cis-undecaprenyl diphosphate + H2O = di-trans,octa-cis-undecaprenyl phosphate + phosphate + H(+). Its function is as follows. Catalyzes the dephosphorylation of undecaprenyl diphosphate (UPP). Confers resistance to bacitracin. The polypeptide is Undecaprenyl-diphosphatase 3 (Bacillus anthracis).